The chain runs to 116 residues: CDKN2AIP N-terminal-like protein (116 aa).

Methionine 1 is modified (N-acetylmethionine). Residues 24–116 (AEQFRSYSES…RSELMKKHQS (93 aa)) form the XRN2-binding (XTBD) domain.

It belongs to the CARF family. As to quaternary structure, interacts with XRN2; the interaction is direct.

The sequence is that of CDKN2AIP N-terminal-like protein (Cdkn2aipnl) from Rattus norvegicus (Rat).